Here is a 467-residue protein sequence, read N- to C-terminus: Adenosylhomocysteinase (467 aa).

Positions 68, 144, and 169 each coordinate substrate. 170–172 (TTT) lines the NAD(+) pocket. Residues K199 and D203 each contribute to the substrate site. Residues N204, 233 to 238 (GYGDVG), E256, N305, 326 to 328 (IGH), and N373 contribute to the NAD(+) site.

It belongs to the adenosylhomocysteinase family. Requires NAD(+) as cofactor.

It is found in the cytoplasm. The enzyme catalyses S-adenosyl-L-homocysteine + H2O = L-homocysteine + adenosine. It functions in the pathway amino-acid biosynthesis; L-homocysteine biosynthesis; L-homocysteine from S-adenosyl-L-homocysteine: step 1/1. May play a key role in the regulation of the intracellular concentration of adenosylhomocysteine. The protein is Adenosylhomocysteinase of Acinetobacter baylyi (strain ATCC 33305 / BD413 / ADP1).